A 160-amino-acid chain; its full sequence is 6,7-dimethyl-8-ribityllumazine synthase (160 aa).

Residues tryptophan 27, 59–61, and 81–83 each bind 5-amino-6-(D-ribitylamino)uracil; these read AIE and VVI. Residue 86–87 participates in (2S)-2-hydroxy-3-oxobutyl phosphate binding; it reads QT. Histidine 89 functions as the Proton donor in the catalytic mechanism. 5-amino-6-(D-ribitylamino)uracil is bound at residue asparagine 114. Position 128 (arginine 128) interacts with (2S)-2-hydroxy-3-oxobutyl phosphate.

It belongs to the DMRL synthase family. As to quaternary structure, homopentamer.

The catalysed reaction is (2S)-2-hydroxy-3-oxobutyl phosphate + 5-amino-6-(D-ribitylamino)uracil = 6,7-dimethyl-8-(1-D-ribityl)lumazine + phosphate + 2 H2O + H(+). It participates in cofactor biosynthesis; riboflavin biosynthesis; riboflavin from 2-hydroxy-3-oxobutyl phosphate and 5-amino-6-(D-ribitylamino)uracil: step 1/2. Catalyzes the formation of 6,7-dimethyl-8-ribityllumazine by condensation of 5-amino-6-(D-ribitylamino)uracil with 3,4-dihydroxy-2-butanone 4-phosphate. This is the penultimate step in the biosynthesis of riboflavin. The chain is 6,7-dimethyl-8-ribityllumazine synthase from Mycobacterium sp. (strain JLS).